Here is a 313-residue protein sequence, read N- to C-terminus: MSQEFAHLSVLLTETVAGLNIKEDGIYIDGTFGRGGHSREVLKHLGENGRLIAIDRDPQAIEAAKQFADDARFSIVHGGFGQLATYVEELGLKGKIDGVLLDFGVSSPQLDDAERGFSFLRDGPLDMRMDNSQGETAADWLARAEVEDMAWVFKTYGEEKNSRHIARCIAADREKTPFLRTKELADLIARISKSKERNKHPATRVFQAIRIYINSELEQIDQALEGALTVLAPQGRLSVISFHSLEDRMVKRFIRRHSQGESVPHGLPITEAEINKTRLLKGVGKAIKPSDEEIERNTRARSSVLRVAQRLEH.

S-adenosyl-L-methionine is bound by residues 35–37 (GGH), Asp-55, Phe-80, Asp-102, and Gln-109.

This sequence belongs to the methyltransferase superfamily. RsmH family.

Its subcellular location is the cytoplasm. The catalysed reaction is cytidine(1402) in 16S rRNA + S-adenosyl-L-methionine = N(4)-methylcytidine(1402) in 16S rRNA + S-adenosyl-L-homocysteine + H(+). Specifically methylates the N4 position of cytidine in position 1402 (C1402) of 16S rRNA. The sequence is that of Ribosomal RNA small subunit methyltransferase H from Shewanella woodyi (strain ATCC 51908 / MS32).